A 507-amino-acid chain; its full sequence is Glucose transporter type 3 (507 aa).

The interval 1 to 26 (MRKGGIQDAEPVEPPQSSRKSGTWFA) is disordered. The Cytoplasmic portion of the chain corresponds to 1–53 (MRKGGIQDAEPVEPPQSSRKSGTWFAKRPSEMPERHVERAPVRQKINNVGLYK). Residues 54–74 (ATLYSNIGSFFFGIAVGWSGT) form a helical membrane-spanning segment. Over 75-95 (AERSVMEQHSYSFQPTELQWS) the chain is Extracellular. The chain crosses the membrane as a helical span at residues 96 to 116 (GVCILLTLGAALWCLPMGLMV). The Cytoplasmic segment spans residues 117 to 124 (RLLGCRRT). A helical membrane pass occupies residues 125–145 (ILIQLLPNFLGWFLTVFARSV). Residues 146 to 152 (PMLYAGR) are Extracellular-facing. Residues 153-173 (FFLGMCGGAHCVVVPIYNAEI) form a helical membrane-spanning segment. Over 174–183 (STTKKRGAMG) the chain is Cytoplasmic. The chain crosses the membrane as a helical span at residues 184–204 (VVFEGACICGVIYSFAMSLFL). At 205–207 (ELR) the chain is on the extracellular side. A helical transmembrane segment spans residues 208 to 228 (IINFVNLGLLALGPLQILMPE). Over 229-293 (SPAYYVDHGN…YKKVRRSLAR (65 aa)) the chain is Cytoplasmic. A helical transmembrane segment spans residues 294–314 (SLAIALLQKLCGALIFIFYGL). Over 315–324 (NMLDCLRIRR) the chain is Extracellular. Residues 325 to 345 (EFGLILCLGLILGFLACFFLV) form a helical membrane-spanning segment. Over 346–351 (DRLGRR) the chain is Cytoplasmic. The chain crosses the membrane as a helical span at residues 352-372 (PLLIFSSAGIVFVSIYLGLHF). Residues 373–374 (KV) lie on the Extracellular side of the membrane. The chain crosses the membrane as a helical span at residues 375 to 395 (WMTMGLTVMSWIALFCIAIFV). The Cytoplasmic segment spans residues 396-420 (GCYTAGVGSLTWVLNAELLVRPMRP). A helical membrane pass occupies residues 421 to 441 (LGCSIVCAFNWLTAFFVICWF). The Extracellular segment spans residues 442–450 (GSHGVKCQP). Residues 451 to 471 (YLFLLFAIIASLILLFSLIYI) form a helical membrane-spanning segment. Residues 472–507 (PETKKLSSAKIQQRLGGLINRPAVITFTSSSDSSNA) lie on the Cytoplasmic side of the membrane.

It belongs to the major facilitator superfamily. Sugar transporter (TC 2.A.1.1) family. Glucose transporter subfamily.

The protein localises to the cell membrane. Its subcellular location is the perikaryon. The protein resides in the cell projection. Its function is as follows. Facilitative glucose transporter that can also mediate the uptake of various other monosaccharides across the cell membrane. The chain is Glucose transporter type 3 (Glut3) from Drosophila melanogaster (Fruit fly).